A 408-amino-acid polypeptide reads, in one-letter code: Aspartokinase 2 (408 aa).

ATP is bound at residue 7-10; the sequence is KFGG. Residue 25–30 participates in substrate binding; that stretch reads RAIAEK. Ser-41 contributes to the ATP binding site. Substrate-binding positions include 47 to 49, Glu-74, 125 to 126, 150 to 153, and Ser-153; these read TDE, LE, and RGGS. ATP-binding positions include 173–174 and 179–184; these read TD and FTTDPR. ACT domains lie at 264–337 and 343–408; these read VTIY…TESK and IVGS…PSAV. Substrate is bound by residues 289 to 291, Gln-295, 354 to 355, 368 to 369, and 375 to 376; these read NVD, VA, LI, and SE.

This sequence belongs to the aspartokinase family. In terms of assembly, tetramer consisting of 2 isoforms Alpha (catalytic and regulation) and of a homodimer of 2 isoforms Beta (regulation).

It carries out the reaction L-aspartate + ATP = 4-phospho-L-aspartate + ADP. The protein operates within amino-acid biosynthesis; L-lysine biosynthesis via DAP pathway; (S)-tetrahydrodipicolinate from L-aspartate: step 1/4. It functions in the pathway amino-acid biosynthesis; L-methionine biosynthesis via de novo pathway; L-homoserine from L-aspartate: step 1/3. It participates in amino-acid biosynthesis; L-threonine biosynthesis; L-threonine from L-aspartate: step 1/5. With respect to regulation, lysine-sensitive. Regulated by degradation in response to starvation of cells for various nutrients. Ammonium starvation induced the fastest aspartokinase II decline, followed by amino acid starvation and glucose limitation. In terms of biological role, catalyzes the phosphorylation of the beta-carboxyl group of aspartic acid with ATP to yield 4-phospho-L-aspartate, which is involved in the branched biosynthetic pathway leading to the biosynthesis of amino acids threonine, isoleucine and methionine. The protein is Aspartokinase 2 (lysC) of Bacillus subtilis (strain 168).